A 929-amino-acid chain; its full sequence is MSQQNILAASVSALSLDESTVHTGGASSKKSRRPHRAYHNFSSGTVPTLGNSPYTTPQLNQQDGFQQPQAFTPKQFGGFNNGSGSVMSTPVMVSQERFGASEASSPYGQSMLDMTAPQPTSHIVPTQRFEDQAQYLQRSFETCRDSVPPLPTTQFYCVDQGSCDPHLMSLSMYNIPESEHLRAATKLPLGLTIQPFSTLTPNDAEVPTIPLPMDGTPLRCRRCRAYANPKFQFTYDSSVICNICRVKMQVPGEHFAPMGPNGQRSDLNEKSELLHGTVDFLVPSIYNAIQEKELLPLHYVFLIDVSLLANENGSSLAMVEGVRSCIEYISDFQPNCEVAIIVYDNKLRFFNLRPDLDNAQEYIVSELDDVFLPFYNGLFVKPGNSMKIINDTLIKISGYISTDKYSHVPQVCYGSALQAAKLALDTVTGGQGGKIICSLNSLPTIGNGNLSLKRDNAHIAHVKCDNGFYKKLASDFLKSYISLDLYVTNAGFIDMATVGHPVEMTSGILKYYPHFQQETDAFTLVNDMVTNVSNIVGYQALLKVRCSTGLSVEQYYCDSSDNTDHDPIIPVLTRDTTLDVLLKYDSKIKTGTDVHFQTALLYTDIDGVRKVRSINTSGAVSNNIREIFKFINQNPVMRIMIKDVIKTLGDCDFVKIRRLIDDKMVEILTQYRGLVSSNSSTQLILPDSIKTLPAYMLAFEKSELMKPNAQSTRGNERIYDLLKYDSLNSAQLCYKLYPQIVPFHVLLEETDLTFYDANDKLLQINSSSINNLSVRASHSNFINGGCYLIFQGDTIYLWFNENTNRMLLQDLLSVDESLPVSQISLFSGTLPETGTSINQKASNVIKNWQQVVNKSSLPLVLLRPNVDQYYSNVMSQLLCEDKTVNRIESYDNYLVIMHKKIQEKLQKDDFIKVSTAATHENIHQKFVQF.

At Ser-15 the chain carries Phosphoserine. Over residues 18–28 the composition is skewed to polar residues; it reads ESTVHTGGASS. Residues 18–52 form a disordered region; the sequence is ESTVHTGGASSKKSRRPHRAYHNFSSGTVPTLGNS. Basic residues predominate over residues 29 to 38; sequence KKSRRPHRAY. Residues 40–52 are compositionally biased toward polar residues; that stretch reads NFSSGTVPTLGNS. Thr-72 is subject to Phosphothreonine. Phosphoserine occurs at positions 83, 85, 94, 101, and 110. Phosphothreonine is present on Thr-216. The zinc finger-like stretch occupies residues 220-244; that stretch reads CRRCRAYANPKFQFTYDSSVICNIC.

This sequence belongs to the SEC23/SEC24 family. SEC24 subfamily. In terms of assembly, COPII is composed of at least five proteins: the SEC23/24 complex, the SEC13/31 complex and SAR1. Binds to SED5. Interacts with GHR1.

It is found in the cytoplasm. Its subcellular location is the golgi apparatus membrane. It localises to the endoplasmic reticulum membrane. Its function is as follows. Component of the COPII coat, that covers ER-derived vesicles involved in transport from the endoplasmic reticulum to the Golgi apparatus. COPII acts in the cytoplasm to promote the transport of secretory, plasma membrane, and vacuolar proteins from the endoplasmic reticulum to the Golgi complex. The chain is SED5-binding protein 3 (SFB3) from Saccharomyces cerevisiae (strain ATCC 204508 / S288c) (Baker's yeast).